The following is a 346-amino-acid chain: Selenide, water dikinase (346 aa).

Residue Sec-16 is part of the active site. Position 16 (Sec-16) is a non-standard amino acid, selenocysteine. Residues Lys-19 and 47–49 (TAD) contribute to the ATP site. Asp-50 is a binding site for Mg(2+). ATP-binding positions include Asp-67, Asp-90, and 138-140 (GHS). Asp-90 is a binding site for Mg(2+). Asp-226 provides a ligand contact to Mg(2+).

This sequence belongs to the selenophosphate synthase 1 family. Class I subfamily. Homodimer. Mg(2+) serves as cofactor.

The enzyme catalyses hydrogenselenide + ATP + H2O = selenophosphate + AMP + phosphate + 2 H(+). Functionally, synthesizes selenophosphate from selenide and ATP. The polypeptide is Selenide, water dikinase (Haemophilus influenzae (strain ATCC 51907 / DSM 11121 / KW20 / Rd)).